Consider the following 356-residue polypeptide: DNA polymerase IV (356 aa).

Residues 7 to 188 (IIHIDMDCFY…LPLKKIPGVG (182 aa)) enclose the UmuC domain. Mg(2+) is bound by residues D11 and D106. Residue E107 is part of the active site.

The protein belongs to the DNA polymerase type-Y family. As to quaternary structure, monomer. Requires Mg(2+) as cofactor.

It localises to the cytoplasm. It carries out the reaction DNA(n) + a 2'-deoxyribonucleoside 5'-triphosphate = DNA(n+1) + diphosphate. In terms of biological role, poorly processive, error-prone DNA polymerase involved in untargeted mutagenesis. Copies undamaged DNA at stalled replication forks, which arise in vivo from mismatched or misaligned primer ends. These misaligned primers can be extended by PolIV. Exhibits no 3'-5' exonuclease (proofreading) activity. May be involved in translesional synthesis, in conjunction with the beta clamp from PolIII. This chain is DNA polymerase IV, found in Actinobacillus pleuropneumoniae serotype 3 (strain JL03).